The following is a 135-amino-acid chain: Large ribosomal subunit protein uL16c (135 aa).

This sequence belongs to the universal ribosomal protein uL16 family. As to quaternary structure, part of the 50S ribosomal subunit.

It is found in the plastid. It localises to the chloroplast. In Gossypium hirsutum (Upland cotton), this protein is Large ribosomal subunit protein uL16c.